The chain runs to 393 residues: Glycocyamine kinase (393 aa).

One can recognise a Phosphagen kinase N-terminal domain in the interval 7–94 (REKFAKENFP…FDRVIEEIHH (88 aa)). The Phosphagen kinase C-terminal domain occupies 120–362 (YVKSCRIRCG…NVLIEADKRL (243 aa)). ATP contacts are provided by residues 123-127 (SCRIR), His186, Arg231, 287-291 (RASVH), 315-320 (RGTGGE), and Asp330. The interval 367–393 (PIDDLTPRLNSSTGTSISATASRHMTL) is disordered. A compositionally biased stretch (low complexity) spans 377 to 393 (SSTGTSISATASRHMTL).

It belongs to the ATP:guanido phosphotransferase family. As to quaternary structure, monomer.

The enzyme catalyses guanidinoacetate + ATP = phosphoguanidinoacetate + ADP + H(+). This is Glycocyamine kinase from Hediste diversicolor (Sandworm).